We begin with the raw amino-acid sequence, 612 residues long: UvrABC system protein C (612 aa).

In terms of domain architecture, GIY-YIG spans 11–90 (TASGVYLMKG…IKKYRPRYNI (80 aa)). Residues 200–235 (SEVVESLQHQMAAAAERMAFEEAARLRDQLRAIEQT) enclose the UVR domain.

It belongs to the UvrC family. In terms of assembly, interacts with UvrB in an incision complex.

It is found in the cytoplasm. In terms of biological role, the UvrABC repair system catalyzes the recognition and processing of DNA lesions. UvrC both incises the 5' and 3' sides of the lesion. The N-terminal half is responsible for the 3' incision and the C-terminal half is responsible for the 5' incision. In Syntrophotalea carbinolica (strain DSM 2380 / NBRC 103641 / GraBd1) (Pelobacter carbinolicus), this protein is UvrABC system protein C.